The sequence spans 152 residues: Large ribosomal subunit protein uL15 (152 aa).

A disordered region spans residues 31–58; it reads GASCGFGMRGQKSRSGRPTRPGFEGGQM.

It belongs to the universal ribosomal protein uL15 family. As to quaternary structure, part of the 50S ribosomal subunit.

In terms of biological role, binds to the 23S rRNA. The protein is Large ribosomal subunit protein uL15 of Parasynechococcus marenigrum (strain WH8102).